A 145-amino-acid chain; its full sequence is Cell division protein SepF (145 aa).

Residues 21-41 (DKPQESTKAKEENVKPKHETP) are disordered. Residues 23–41 (PQESTKAKEENVKPKHETP) are compositionally biased toward basic and acidic residues.

It belongs to the SepF family. In terms of assembly, homodimer. Interacts with FtsZ.

The protein resides in the cytoplasm. Functionally, cell division protein that is part of the divisome complex and is recruited early to the Z-ring. Probably stimulates Z-ring formation, perhaps through the cross-linking of FtsZ protofilaments. Its function overlaps with FtsA. This is Cell division protein SepF from Caldicellulosiruptor saccharolyticus (strain ATCC 43494 / DSM 8903 / Tp8T 6331).